The following is a 1180-amino-acid chain: Neurexin like receptor 1 (1180 aa).

Positions 1–20 are cleaved as a signal peptide; that stretch reads MSGLCLVLLLSIFAVSQSSG. Over 21-1108 the chain is Extracellular; sequence ECSDVSFSSV…SQNKQDLVSK (1088 aa). Residues 124-290 enclose the Laminin G-like 1 domain; sequence PITAFDDSSY…LSPNEVHNQC (167 aa). Asn-229 carries an N-linked (GlcNAc...) asparagine glycan. Cys-267 and Cys-290 are disulfide-bonded. N-linked (GlcNAc...) asparagine glycans are attached at residues Asn-302, Asn-336, Asn-355, and Asn-436. Residues 444-481 enclose the EGF-like 1 domain; the sequence is FQEKCLPNPCENGGGCVQSALDDYVCNCKEGYKGKNCH. 3 disulfide bridges follow: Cys-448–Cys-459, Cys-453–Cys-469, and Cys-471–Cys-480. Residues Asn-522 and Asn-636 are each glycosylated (N-linked (GlcNAc...) asparagine). The Laminin G-like 2 domain occupies 695–863; the sequence is TFDPVTFSNR…GVAIGDDGYC (169 aa). One can recognise an EGF-like 2 domain in the interval 859 to 896; the sequence is DDGYCRPDLCQNGGQCVDKYDGYVCDCSMTPFGGSDCT. Intrachain disulfides connect Cys-863–Cys-874, Cys-868–Cys-883, and Cys-885–Cys-895. 6 N-linked (GlcNAc...) asparagine glycosylation sites follow: Asn-933, Asn-949, Asn-978, Asn-997, Asn-1011, and Asn-1052. A helical membrane pass occupies residues 1109–1129; it reads AIIGGGILALSLFILCMSSLI. Residues 1130 to 1180 lie on the Cytoplasmic side of the membrane; it reads CYMRSRPEGVYKTNETGENCSPSRSEEPLVHNTTSNNNNNPTYASNKEYFC. Over residues 1142-1152 the composition is skewed to polar residues; the sequence is TNETGENCSPS. The disordered stretch occupies residues 1142 to 1180; the sequence is TNETGENCSPSRSEEPLVHNTTSNNNNNPTYASNKEYFC. The segment covering 1161–1171 has biased composition (low complexity); it reads NTTSNNNNNPT.

The protein belongs to the neurexin family. In terms of assembly, interacts (via the intracellular domain) with F-actin; the interaction is required for anchoring F-actin at the membrane for gap junction formation. As to expression, highly expressed in pharyngeal g1 and g2 gland cells, pharyngeal muscle cells and the unilateral GABAergic RIS interneuron (at protein level). Expressed in pm5 pharyngeal muscle cells and the nerve ring.

It is found in the cell membrane. It localises to the cell junction. The protein resides in the gap junction. Functionally, required for gap junction formation, playing a role in anchoring the cytoskeletal component F-actin to the membrane of adjacent cells and thus facilitating the formation of gap junction channels in embryonic cells, muscle cells and neuronal cells. Plays a role in maintaining gap junction activity to promote pharyngeal muscle contraction. The polypeptide is Neurexin like receptor 1 (Caenorhabditis elegans).